The chain runs to 201 residues: Peptidyl-tRNA hydrolase (201 aa).

Y15 is a tRNA binding site. H20 functions as the Proton acceptor in the catalytic mechanism. TRNA-binding residues include Y66, N68, and N114.

Belongs to the PTH family. Monomer.

Its subcellular location is the cytoplasm. The catalysed reaction is an N-acyl-L-alpha-aminoacyl-tRNA + H2O = an N-acyl-L-amino acid + a tRNA + H(+). In terms of biological role, hydrolyzes ribosome-free peptidyl-tRNAs (with 1 or more amino acids incorporated), which drop off the ribosome during protein synthesis, or as a result of ribosome stalling. Functionally, catalyzes the release of premature peptidyl moieties from peptidyl-tRNA molecules trapped in stalled 50S ribosomal subunits, and thus maintains levels of free tRNAs and 50S ribosomes. The sequence is that of Peptidyl-tRNA hydrolase from Burkholderia mallei (strain ATCC 23344).